The sequence spans 535 residues: F-box protein At1g56610 (535 aa).

Transmembrane regions (helical) follow at residues 3 to 23 (FALVLIFLFGFYLFLMKSSSI), 37 to 57 (VLLLVLRFLFSLIQILILCLF), and 82 to 102 (LAPHILSWLPTKTAVTVSLLF). The region spanning 73 to 119 (TELCDLPKCLAPHILSWLPTKTAVTVSLLFMKGWWRSEMKNLSSLKF) is the F-box; degenerate domain.

As to quaternary structure, part of a SCF (ASK-cullin-F-box) protein ligase complex. Interacts with ASK4.

The protein resides in the membrane. It participates in protein modification; protein ubiquitination. Its function is as follows. Component of SCF(ASK-cullin-F-box) E3 ubiquitin ligase complexes, which may mediate the ubiquitination and subsequent proteasomal degradation of target proteins. The protein is F-box protein At1g56610 of Arabidopsis thaliana (Mouse-ear cress).